A 131-amino-acid polypeptide reads, in one-letter code: Classical arabinogalactan protein 2 (131 aa).

An N-terminal signal peptide occupies residues 1-21 (MNSKAMQALIFLGFLATSCLA). Residue Q22 is modified to Pyrrolidone carboxylic acid. 4-hydroxyproline is present on residues P24, P26, P28, P34, and P35. P24, P26, P28, P34, and P35 each carry an O-linked (Ara...) hydroxyproline glycan. Positions 24-106 (PAPAPTTVTP…PGPDGAADAP (83 aa)) are disordered. 2 stretches are compositionally biased toward pro residues: residues 25 to 38 (APAPTTVTPPPTAL) and 49 to 64 (IASPPVPVNEPTPAPT). Composition is skewed to low complexity over residues 65–76 (TSPTTSPVASPP) and 90–106 (TPTSSPAPGPDGAADAP). S107 carries the GPI-anchor amidated serine lipid modification. The propeptide at 108–131 (AAWANKAFLVGTAVAGALYAVVLA) is removed in mature form.

The protein belongs to the classical AGP family. Post-translationally, O-glycosylated on hydroxyprolines; noncontiguous hydroxylproline residues are glycosylated with arabinogalactan.

It is found in the cell membrane. Functionally, proteoglycan that seems to be implicated in diverse developmental roles such as differentiation, cell-cell recognition, embryogenesis and programmed cell death. The polypeptide is Classical arabinogalactan protein 2 (AGP2) (Arabidopsis thaliana (Mouse-ear cress)).